The chain runs to 162 residues: Interleukin-15 (162 aa).

Positions 1–29 (MRISKPHLRSISIQCYLCLLLNSHFLTEA) are cleaved as a signal peptide. A propeptide spanning residues 30–48 (GIHVFILGCFSAGLPKTEA) is cleaved from the precursor. 2 disulfide bridges follow: C83/C133 and C90/C136. N127 is a glycosylation site (N-linked (GlcNAc...) asparagine).

This sequence belongs to the IL-15/IL-21 family. Most abundant in placenta and skeletal muscle. It is also detected in the heart, lung, liver and kidney. IL15-S21AA is preferentially expressed in tissues such as testis and thymus.

The protein resides in the secreted. Its subcellular location is the cytoplasm. The protein localises to the nucleus. Its function is as follows. Cytokine that plays a major role in the development of inflammatory and protective immune responses to microbial invaders and parasites by modulating immune cells of both the innate and adaptive immune systems. Stimulates the proliferation of natural killer cells, T-cells and B-cells and promotes the secretion of several cytokines. In monocytes, induces the production of IL8 and monocyte chemotactic protein 1/CCL2, two chemokines that attract neutrophils and monocytes respectively to sites of infection. Unlike most cytokines, which are secreted in soluble form, IL15 is expressed in association with its high affinity IL15RA on the surface of IL15-producing cells and delivers signals to target cells that express IL2RB and IL2RG receptor subunits. Binding to its receptor triggers the phosphorylation of JAK1 and JAK3 and the recruitment and subsequent phosphorylation of signal transducer and activator of transcription-3/STAT3 and STAT5. In mast cells, induces the rapid tyrosine phosphorylation of STAT6 and thereby controls mast cell survival and release of cytokines such as IL4. This is Interleukin-15 (IL15) from Homo sapiens (Human).